Reading from the N-terminus, the 418-residue chain is Serine hydroxymethyltransferase (418 aa).

Residues Leu121 and 125–127 each bind (6S)-5,6,7,8-tetrahydrofolate; that span reads GHL. At Lys230 the chain carries N6-(pyridoxal phosphate)lysine. 356–358 provides a ligand contact to (6S)-5,6,7,8-tetrahydrofolate; the sequence is SPF.

This sequence belongs to the SHMT family. Homodimer. It depends on pyridoxal 5'-phosphate as a cofactor.

The protein localises to the cytoplasm. It catalyses the reaction (6R)-5,10-methylene-5,6,7,8-tetrahydrofolate + glycine + H2O = (6S)-5,6,7,8-tetrahydrofolate + L-serine. It participates in one-carbon metabolism; tetrahydrofolate interconversion. It functions in the pathway amino-acid biosynthesis; glycine biosynthesis; glycine from L-serine: step 1/1. In terms of biological role, catalyzes the reversible interconversion of serine and glycine with tetrahydrofolate (THF) serving as the one-carbon carrier. This reaction serves as the major source of one-carbon groups required for the biosynthesis of purines, thymidylate, methionine, and other important biomolecules. Also exhibits THF-independent aldolase activity toward beta-hydroxyamino acids, producing glycine and aldehydes, via a retro-aldol mechanism. In Idiomarina loihiensis (strain ATCC BAA-735 / DSM 15497 / L2-TR), this protein is Serine hydroxymethyltransferase.